We begin with the raw amino-acid sequence, 328 residues long: Malate dehydrogenase (328 aa).

Residue 11 to 17 participates in NAD(+) binding; sequence GAAGQIG. Substrate is bound by residues Arg94 and Arg100. Residues Asn107, Gln114, and 131 to 133 contribute to the NAD(+) site; that span reads VGN. Substrate contacts are provided by Asn133 and Arg164. The active-site Proton acceptor is the His189.

This sequence belongs to the LDH/MDH superfamily. MDH type 2 family.

The enzyme catalyses (S)-malate + NAD(+) = oxaloacetate + NADH + H(+). Its function is as follows. Catalyzes the reversible oxidation of malate to oxaloacetate. The protein is Malate dehydrogenase of Acinetobacter baumannii (strain SDF).